Here is a 457-residue protein sequence, read N- to C-terminus: MSAAGTGKKVFIKTFGCQMNEYDSDKMADVLRAAEGYEPTTDVEQADLILFNTCSVREKAQEKVFSDLGRVKHLKARGVKIGVGGCVASQEGAALIERAPYVDVVFGPQTLHRLPEMLARRDAQQRPQVDISFPEIEKFDHLPPARVDGATAFVSIMEGCSKYCSYCVVPYTRGEEVSRPFDDVLTEVASLADQGVKEVTLLGQNVNGYRGRMGDTAEIADFALLLEYVAEIPGIARIRYTTSHPNEFSQRLIDVYARVPQLVNHLHLPVQHGSDRILSAMKRGYTSLEYKSSIRKLRAIRPDISLSTDFIVGFPGETDDDHARTMKLIEDVGFDHSFSFIYSARPGTPAAALHDDAPRELKLARLQQVQEAIEANGRRIGQSRVGTVQRILVEGPSRRPELNAGHELMGRTECNRIVNFAGPARLTGQLIDVTITEAYPHSLRGEVLLRERSPQPA.

An MTTase N-terminal domain is found at Lys-8–Ala-123. 6 residues coordinate [4Fe-4S] cluster: Cys-17, Cys-54, Cys-86, Cys-160, Cys-164, and Cys-167. In terms of domain architecture, Radical SAM core spans Arg-146–Arg-379. The TRAM domain occupies Gln-382–Leu-449.

It belongs to the methylthiotransferase family. MiaB subfamily. As to quaternary structure, monomer. [4Fe-4S] cluster is required as a cofactor.

Its subcellular location is the cytoplasm. The enzyme catalyses N(6)-dimethylallyladenosine(37) in tRNA + (sulfur carrier)-SH + AH2 + 2 S-adenosyl-L-methionine = 2-methylsulfanyl-N(6)-dimethylallyladenosine(37) in tRNA + (sulfur carrier)-H + 5'-deoxyadenosine + L-methionine + A + S-adenosyl-L-homocysteine + 2 H(+). Catalyzes the methylthiolation of N6-(dimethylallyl)adenosine (i(6)A), leading to the formation of 2-methylthio-N6-(dimethylallyl)adenosine (ms(2)i(6)A) at position 37 in tRNAs that read codons beginning with uridine. This Methylibium petroleiphilum (strain ATCC BAA-1232 / LMG 22953 / PM1) protein is tRNA-2-methylthio-N(6)-dimethylallyladenosine synthase.